A 308-amino-acid polypeptide reads, in one-letter code: N-acetyl-gamma-glutamyl-phosphate reductase (308 aa).

Cysteine 116 is an active-site residue.

The protein belongs to the NAGSA dehydrogenase family. Type 2 subfamily.

The protein localises to the cytoplasm. It catalyses the reaction N-acetyl-L-glutamate 5-semialdehyde + phosphate + NADP(+) = N-acetyl-L-glutamyl 5-phosphate + NADPH + H(+). The protein operates within amino-acid biosynthesis; L-arginine biosynthesis; N(2)-acetyl-L-ornithine from L-glutamate: step 3/4. Catalyzes the NADPH-dependent reduction of N-acetyl-5-glutamyl phosphate to yield N-acetyl-L-glutamate 5-semialdehyde. This is N-acetyl-gamma-glutamyl-phosphate reductase from Mesorhizobium japonicum (strain LMG 29417 / CECT 9101 / MAFF 303099) (Mesorhizobium loti (strain MAFF 303099)).